The sequence spans 63 residues: Cecropin-1 (63 aa).

The first 21 residues, 1 to 21 (MNFNKVFILVAIVIAIFAGQT), serve as a signal peptide directing secretion. A propeptide spanning residues 22–23 (EA) is cleaved from the precursor. Arg62 bears the Arginine amide mark.

This sequence belongs to the cecropin family.

It is found in the secreted. In terms of biological role, cecropins have lytic and antibacterial activity against several Gram-positive and Gram-negative bacteria. This chain is Cecropin-1 (CEC1), found in Ceratitis capitata (Mediterranean fruit fly).